The sequence spans 1186 residues: Partner and localizer of BRCA2 (1186 aa).

The segment at 1-160 (MDEPPGKPLS…QKRTFISQER (160 aa)) is required for its oligomerization and is important for its focal concentration at DNA damage sites. An interaction with RAD51 region spans residues 1–200 (MDEPPGKPLS…PVTEIRTHLL (200 aa)). The interaction with BRCA1 stretch occupies residues 1–319 (MDEPPGKPLS…SKSGQLPTSS (319 aa)). Residues 1–579 (MDEPPGKPLS…EDSLSWSNSA (579 aa)) form a DNA-binding (with the preference D loop &gt; dsDNA &gt; ssDNA) region. Residues 9–41 (LSCEEKEKLKEKLAFLKREYSKTLARLQRAQRA) are a coiled coil. Disordered regions lie at residues 52-72 (VEEQ…HSEP) and 95-157 (KTSI…TFIS). The span at 120–141 (RTDDTQEHFPHRVSDPSGEQKQ) shows a compositional bias: basic and acidic residues. Positions 143-152 (LPSRRKKQQK) are enriched in basic residues. Ser-172 and Ser-190 each carry phosphoserine. Residues 252 to 273 (TLSDSGSSQHLEHIPPKGSSEL) form a disordered region. Phosphoserine is present on Ser-285. The disordered stretch occupies residues 346–365 (KEQNQTEKSLKSPSDTLDGR). Ser-376 and Ser-387 each carry phosphoserine. The tract at residues 395–446 (SCTVPEGLLFPAEYYVRTTRSMSNCQRKVAVEAVIQSHLDVKKKGFKNKNKD) is chAM (Chromatin-association motif); required for chromatin association, mediates nucleosome association. Residues 440–525 (FKNKNKDASK…RKSACTPASD (86 aa)) are disordered. Ser-454 carries the phosphoserine modification. A compositionally biased stretch (polar residues) spans 467–488 (GTCTGQPSSRTSQKLLSLTKVS). Residue Ser-660 is modified to Phosphoserine. Disordered regions lie at residues 679 to 698 (PGKS…KTGL) and 774 to 798 (KQFD…QGQP). Polar residues predominate over residues 687–698 (PNSQSQHTKTGL). Residues 775–1186 (QFDSSGSPAK…DGNIFVYHYS (412 aa)) form a required for interaction with POLH and POLH DNA synthesis stimulation region. Position 781 is a phosphoserine (Ser-781). An interaction with RAD51, BRCA2 and POLH region spans residues 853–1186 (GNLQLVSELK…DGNIFVYHYS (334 aa)). WD repeat units lie at residues 854–915 (NLQL…WHFA), 917–961 (VPVL…QVLL), 962–1009 (KSGN…LMPP), 1010–1052 (EETI…MHID), 1058–1109 (SVCH…MLYC), 1115–1153 (AGRF…LLPP), and 1155–1186 (SDQH…YHYS).

Homooligomer; dissociated upon DNA damage thus allowing association with BRCA1. Oligomerization is essential for its focal accumulation at DNA breaks. Part of a BRCA complex containing BRCA1, BRCA2 and PALB2. Interacts with BRCA1 and this interaction is essential for its function in HRR. Interacts with RAD51AP1 and MORF4L1/MRG15. Component of the homologous recombination repair (HR) complex composed of ERCC5/XPG, BRCA2, PALB2, DSS1 and RAD51. Within the complex, interacts with ERCC5/XPG and BRCA2. Interacts with BRCA2, RAD51C, RAD51 and XRCC3; the interactions are direct and it may serve as a scaffold for a HR complex containing PALB2, BRCA2, RAD51C, RAD51 and XRCC3. Interacts with POLH; the interaction is direct.

The protein resides in the nucleus. Its function is as follows. Plays a critical role in homologous recombination repair (HRR) through its ability to recruit BRCA2 and RAD51 to DNA breaks. Strongly stimulates the DNA strand-invasion activity of RAD51, stabilizes the nucleoprotein filament against a disruptive BRC3-BRC4 polypeptide and helps RAD51 to overcome the suppressive effect of replication protein A (RPA). Functionally cooperates with RAD51AP1 in promoting of D-loop formation by RAD51. Serves as the molecular scaffold in the formation of the BRCA1-PALB2-BRCA2 complex which is essential for homologous recombination. Via its WD repeats is proposed to scaffold a HR complex containing RAD51C and BRCA2 which is thought to play a role in HR-mediated DNA repair. Essential partner of BRCA2 that promotes the localization and stability of BRCA2. Also enables its recombinational repair and checkpoint functions of BRCA2. May act by promoting stable association of BRCA2 with nuclear structures, allowing BRCA2 to escape the effects of proteasome-mediated degradation. Binds DNA with high affinity for D loop, which comprises single-stranded, double-stranded and branched DNA structures. May play a role in the extension step after strand invasion at replication-dependent DNA double-strand breaks; together with BRCA2 is involved in both POLH localization at collapsed replication forks and DNA polymerization activity. This chain is Partner and localizer of BRCA2 (PALB2), found in Homo sapiens (Human).